The chain runs to 398 residues: Ornithine aminotransferase (398 aa).

The residue at position 256 (lysine 256) is an N6-(pyridoxal phosphate)lysine.

This sequence belongs to the class-III pyridoxal-phosphate-dependent aminotransferase family. OAT subfamily. Pyridoxal 5'-phosphate is required as a cofactor.

It is found in the cytoplasm. It carries out the reaction a 2-oxocarboxylate + L-ornithine = L-glutamate 5-semialdehyde + an L-alpha-amino acid. It participates in amino-acid biosynthesis; L-proline biosynthesis; L-glutamate 5-semialdehyde from L-ornithine: step 1/1. Catalyzes the interconversion of ornithine to glutamate semialdehyde. This chain is Ornithine aminotransferase, found in Oceanobacillus iheyensis (strain DSM 14371 / CIP 107618 / JCM 11309 / KCTC 3954 / HTE831).